An 84-amino-acid chain; its full sequence is MNSLLMITACLILIGTVWAEDGYLFDKRKRCTLACIDKTGDKNCDRNCKKEGGSFGHCSYSACWCKGLPGSTPISRTPGKTCKK.

A signal peptide spans 1-19; the sequence is MNSLLMITACLILIGTVWA. An LCN-type CS-alpha/beta domain is found at 20–83; it reads EDGYLFDKRK…ISRTPGKTCK (64 aa). 4 disulfide bridges follow: cysteine 31/cysteine 82, cysteine 35/cysteine 58, cysteine 44/cysteine 63, and cysteine 48/cysteine 65.

As to expression, expressed by the venom gland.

It localises to the secreted. Beta toxins bind voltage-independently at site-4 of sodium channels (Nav) and shift the voltage of activation toward more negative potentials thereby affecting sodium channel activation and promoting spontaneous and repetitive firing. Has some action on peripheral ganglia, but not on other sodium channels such as those from cerebellum granular cells in culture. Induces sleep, suggesting a strong antiepileptic action. This Centruroides limpidus (Mexican scorpion) protein is Toxin Cll9.